Consider the following 130-residue polypeptide: Serum amyloid A-4 protein (130 aa).

The first 18 residues, 1–18, serve as a signal peptide directing secretion; it reads MRLATVIVLCSLFLGVSG. The segment at 109–130 is disordered; sequence EEWGRSGKNPNHFRPEGLPEKF. Basic and acidic residues predominate over residues 121–130; that stretch reads FRPEGLPEKF.

It belongs to the SAA family. In terms of assembly, apolipoprotein of the HDL complex. Expressed by the liver; secreted in plasma.

The protein resides in the secreted. Major acute phase reactant. In Mus musculus (Mouse), this protein is Serum amyloid A-4 protein.